A 219-amino-acid polypeptide reads, in one-letter code: Claudin-3 (219 aa).

At 1 to 8 the chain is on the cytoplasmic side; sequence MSMGLEIT. The helical transmembrane segment at 9–29 threads the bilayer; sequence GTSLAVLGWLCTIVCCALPMW. The Extracellular portion of the chain corresponds to 30 to 80; it reads RVSAFIGSSIITAQITWEGLWMNCVVQSTGQMQCKMYDSLLALPQDLQAAR. Residues 81-101 form a helical membrane-spanning segment; the sequence is ALIVVSILLAAFGLLVALVGA. Over 102 to 115 the chain is Cytoplasmic; that stretch reads QCTNCVQDETAKAK. Residues 116 to 136 traverse the membrane as a helical segment; it reads ITIVAGVLFLLAALLTLVPVS. Residues 137–159 lie on the Extracellular side of the membrane; sequence WSANTIIRDFYNPLVPEAQKREM. The helical transmembrane segment at 160–180 threads the bilayer; that stretch reads GAGLYVGWAAAALQLLGGALL. Topologically, residues 181–219 are cytoplasmic; sequence CCSCPPRDKYAPTKILYSAPRSTGPGTGTGTAYDRKDYV. Tyr197 bears the Phosphotyrosine mark. Ser198 is modified (phosphoserine). The interval 218-219 is interactions with TJP1, TJP2 and TJP3; that stretch reads YV.

This sequence belongs to the claudin family. In terms of assembly, can form homo- and heteropolymers with other CLDN. Homopolymers interact with CLDN1 and CLDN2 homopolymers. Interacts in cis (within the same plasma membrane) with CLDN19. Directly interacts with TJP1/ZO-1, TJP2/ZO-2 and TJP3/ZO-3. (Microbial infection) Interacts with Clostridium perfringens enterotoxin CPE; the interaction may disrupt claudin assembly in tight junctions. Expressed in the lung. Expressed at high levels in the liver and at lower levels, in kidney and testis.

The protein resides in the cell junction. It localises to the tight junction. Its subcellular location is the cell membrane. Functionally, plays a major role in tight junction-specific obliteration of the intercellular space, through calcium-independent cell-adhesion activity. In Mus musculus (Mouse), this protein is Claudin-3 (Cldn3).